The chain runs to 109 residues: UPF0154 protein UPA3_0273 (109 aa).

Residues 42 to 62 form a helical membrane-spanning segment; it reads VGLGIGIVLFLIAGLIIGYFI.

Belongs to the UPF0154 family.

The protein resides in the cell membrane. The chain is UPF0154 protein UPA3_0273 from Ureaplasma parvum serovar 3 (strain ATCC 27815 / 27 / NCTC 11736).